A 183-amino-acid chain; its full sequence is ATP synthase subunit delta (183 aa).

This sequence belongs to the ATPase delta chain family. F-type ATPases have 2 components, F(1) - the catalytic core - and F(0) - the membrane proton channel. F(1) has five subunits: alpha(3), beta(3), gamma(1), delta(1), epsilon(1). F(0) has three main subunits: a(1), b(2) and c(10-14). The alpha and beta chains form an alternating ring which encloses part of the gamma chain. F(1) is attached to F(0) by a central stalk formed by the gamma and epsilon chains, while a peripheral stalk is formed by the delta and b chains.

It localises to the cell inner membrane. Functionally, f(1)F(0) ATP synthase produces ATP from ADP in the presence of a proton or sodium gradient. F-type ATPases consist of two structural domains, F(1) containing the extramembraneous catalytic core and F(0) containing the membrane proton channel, linked together by a central stalk and a peripheral stalk. During catalysis, ATP synthesis in the catalytic domain of F(1) is coupled via a rotary mechanism of the central stalk subunits to proton translocation. In terms of biological role, this protein is part of the stalk that links CF(0) to CF(1). It either transmits conformational changes from CF(0) to CF(1) or is implicated in proton conduction. In Thermosipho africanus (strain TCF52B), this protein is ATP synthase subunit delta.